A 141-amino-acid chain; its full sequence is Brain ribonuclease (141 aa).

Positions 1–25 are disordered; it reads KETAAAKFRRQHMDSGSSSSSNSNY. Substrate is bound by residues Lys7 and Arg10. The Proton acceptor role is filled by His12. Over residues 15-24 the composition is skewed to low complexity; the sequence is SGSSSSSNSN. 4 disulfides stabilise this stretch: Cys26–Cys84, Cys40–Cys95, Cys58–Cys110, and Cys65–Cys72. 41-45 contacts substrate; the sequence is KPVNT. An N-linked (GlcNAc...) asparagine glycan is attached at Asn62. Substrate-binding residues include Lys66 and Arg85. His119 serves as the catalytic Proton donor. Residue Thr129 is glycosylated (O-linked (GalNAc...) threonine).

The protein belongs to the pancreatic ribonuclease family.

The protein localises to the secreted. The chain is Brain ribonuclease (BRN) from Giraffa camelopardalis (Giraffe).